A 370-amino-acid chain; its full sequence is tRNA/tmRNA (uracil-C(5))-methyltransferase (370 aa).

Residues glutamine 195, tyrosine 221, asparagine 226, glutamate 242, and aspartate 302 each contribute to the S-adenosyl-L-methionine site. Cysteine 327 (nucleophile) is an active-site residue. Glutamate 361 serves as the catalytic Proton acceptor.

Belongs to the class I-like SAM-binding methyltransferase superfamily. RNA M5U methyltransferase family. TrmA subfamily.

It carries out the reaction uridine(54) in tRNA + S-adenosyl-L-methionine = 5-methyluridine(54) in tRNA + S-adenosyl-L-homocysteine + H(+). The catalysed reaction is uridine(341) in tmRNA + S-adenosyl-L-methionine = 5-methyluridine(341) in tmRNA + S-adenosyl-L-homocysteine + H(+). Its function is as follows. Dual-specificity methyltransferase that catalyzes the formation of 5-methyluridine at position 54 (m5U54) in all tRNAs, and that of position 341 (m5U341) in tmRNA (transfer-mRNA). The chain is tRNA/tmRNA (uracil-C(5))-methyltransferase from Wolinella succinogenes (strain ATCC 29543 / DSM 1740 / CCUG 13145 / JCM 31913 / LMG 7466 / NCTC 11488 / FDC 602W) (Vibrio succinogenes).